The primary structure comprises 620 residues: MSHILVNVAWPYANGPRHIGHVAGFGVPSDVYARYERMKGNDVLMVSGTDEHGTPILVEADKEGVSAQELANRYNRVIAKDLCDLGLSYDLFTRTTTGNHEKVVQELFKQCLENGYIYKGTQKVAISPSTGRTLPDRYIEGTCPICGADGARGDQCDACGNELDPDELLNPVSKINGETPRFEETEHFFLDLPALAEANLAWLKTREGWRTNVINFSIGLFKEVKPRAITRDIDWGIPVPVKGWIDNPNKKLYVWFDAVIGYLSASIEWARRKGDPEAWRAWWNDPTTPGYYFMGKDNITFHSQIWPSEMLAYNGQGSKGGETGKLGPLNMPEQVVASEFMTMEGKKFSSSRGIVIYVKDILARYPVDAVRYYISVAGPESSDSDFTWAEFVRHNNEELAASWGNLVNRVANLINKNFGEIPAFDEASATDEDRALLAETKAAFETVGGLIENHRQKNALSEAMRVVGDINKYISATEPWKIKDNPARLGTVLHTAAQAVSDANHLLAPFLPHSAQKVWEALGGTGVFSPLPRLEEVEDLDKPGFTYPIITGDYKLGETVHPWASEPIVAGTSVPKPHPIFAKIPPEAVEEELARFDAELKARREAEAARLAAEKAKLEG.

The 'HIGH' region motif lies at 11 to 21 (PYANGPRHIGH). Zn(2+) is bound by residues cysteine 143, cysteine 146, cysteine 156, and cysteine 159. The short motif at 347–351 (KFSSS) is the 'KMSKS' region element. Serine 350 contributes to the ATP binding site.

The protein belongs to the class-I aminoacyl-tRNA synthetase family. MetG type 1 subfamily. Monomer. It depends on Zn(2+) as a cofactor.

The protein localises to the cytoplasm. It carries out the reaction tRNA(Met) + L-methionine + ATP = L-methionyl-tRNA(Met) + AMP + diphosphate. Functionally, is required not only for elongation of protein synthesis but also for the initiation of all mRNA translation through initiator tRNA(fMet) aminoacylation. This is Methionine--tRNA ligase from Bifidobacterium adolescentis (strain ATCC 15703 / DSM 20083 / NCTC 11814 / E194a).